Reading from the N-terminus, the 218-residue chain is Lipoprotein-releasing system ATP-binding protein LolD (218 aa).

The region spanning 2–218 is the ABC transporter domain; the sequence is IKLEGITKSF…HMVDGTIKKD (217 aa). 34–41 contacts ATP; the sequence is GPSGAGKT.

Belongs to the ABC transporter superfamily. Lipoprotein translocase (TC 3.A.1.125) family. In terms of assembly, the complex is composed of two ATP-binding proteins (LolD) and two transmembrane proteins (LolC and LolE).

Its subcellular location is the cell inner membrane. Its function is as follows. Part of the ABC transporter complex LolCDE involved in the translocation of mature outer membrane-directed lipoproteins, from the inner membrane to the periplasmic chaperone, LolA. Responsible for the formation of the LolA-lipoprotein complex in an ATP-dependent manner. The protein is Lipoprotein-releasing system ATP-binding protein LolD of Bacteroides thetaiotaomicron (strain ATCC 29148 / DSM 2079 / JCM 5827 / CCUG 10774 / NCTC 10582 / VPI-5482 / E50).